The chain runs to 454 residues: Adenylosuccinate synthetase isozyme 1 B (454 aa).

Positions 1–24 (MSGTRASNDRSSHPGAGGHKRPRY) are disordered. Residues 39-45 (GDEGKGK) and 67-69 (GHT) contribute to the GTP site. The active-site Proton acceptor is D40. Mg(2+)-binding residues include D40 and G67. Residue D40 participates in substrate binding. Residues 40–43 (DEGK), 65–68 (NAGH), T160, R174, N253, T268, and R332 each bind IMP. The active-site Proton donor is the H68. 328-334 (VTTGRKR) provides a ligand contact to substrate. Residues R334, 360–362 (KLD), and 442–445 (GVGK) contribute to the GTP site.

It belongs to the adenylosuccinate synthetase family. Homodimer. The cofactor is Mg(2+).

It is found in the cytoplasm. The enzyme catalyses IMP + L-aspartate + GTP = N(6)-(1,2-dicarboxyethyl)-AMP + GDP + phosphate + 2 H(+). It participates in purine metabolism; AMP biosynthesis via de novo pathway; AMP from IMP: step 1/2. In terms of biological role, component of the purine nucleotide cycle (PNC), which interconverts IMP and AMP to regulate the nucleotide levels in various tissues, and which contributes to glycolysis and ammoniagenesis. Catalyzes the first committed step in the biosynthesis of AMP from IMP. The sequence is that of Adenylosuccinate synthetase isozyme 1 B (adss1-b) from Xenopus laevis (African clawed frog).